We begin with the raw amino-acid sequence, 439 residues long: Kinesin-like protein KIN-13 (439 aa).

1 to 5 (GSGKS) is a binding site for ATP. The Kinesin motor domain occupies 1–240 (GSGKSFTMMH…LRYADRVKEL (240 aa)).

The protein belongs to the TRAFAC class myosin-kinesin ATPase superfamily. Kinesin family. KIN-13 subfamily. Interacts with PLK. Post-translationally, phosphorylated by PLK.

Its subcellular location is the cytoplasm. The protein localises to the cytoskeleton. The protein resides in the cell projection. It is found in the cilium. It localises to the flagellum. Its subcellular location is the flagellum basal body. The protein localises to the flagellum axoneme. The protein resides in the spindle. It is found in the chromosome. It localises to the centromere. Its subcellular location is the kinetochore. Involved in cell cycle. Involved in formation of flagella, regulation of flagellar length, and formation of median bodies during interphase. Regulates flagellar length in all eight distal flagellar tips by promoting disassembly of the microtubules. Disassembles microtubules at the distal flagellar tips in a length-dependent manner in order to maintain different equilibrium lengths of the four flagellar pairs. Regulates interphase and mitotic microtubule dynamics. Regulates microtubule disassembly dynamics of the dual mitotic spindles and the median body. This Giardia intestinalis (Giardia lamblia) protein is Kinesin-like protein KIN-13.